The primary structure comprises 100 residues: Integration host factor subunit alpha (100 aa).

Residues 54–73 (DLRDKRQRPGRNPKTGEEIP) form a disordered region.

It belongs to the bacterial histone-like protein family. In terms of assembly, heterodimer of an alpha and a beta chain.

In terms of biological role, this protein is one of the two subunits of integration host factor, a specific DNA-binding protein that functions in genetic recombination as well as in transcriptional and translational control. In Pseudomonas aeruginosa (strain UCBPP-PA14), this protein is Integration host factor subunit alpha.